An 84-amino-acid polypeptide reads, in one-letter code: Small ribosomal subunit protein uS17 (84 aa).

This sequence belongs to the universal ribosomal protein uS17 family. Part of the 30S ribosomal subunit.

Functionally, one of the primary rRNA binding proteins, it binds specifically to the 5'-end of 16S ribosomal RNA. The polypeptide is Small ribosomal subunit protein uS17 (Clostridium botulinum (strain Okra / Type B1)).